Consider the following 199-residue polypeptide: Probable adenylyl-sulfate kinase (199 aa).

34-41 serves as a coordination point for ATP; it reads GLSGSGKS. S108 acts as the Phosphoserine intermediate in catalysis.

It belongs to the APS kinase family.

It catalyses the reaction adenosine 5'-phosphosulfate + ATP = 3'-phosphoadenylyl sulfate + ADP + H(+). Its pathway is sulfur metabolism; hydrogen sulfide biosynthesis; sulfite from sulfate: step 2/3. Functionally, catalyzes the synthesis of activated sulfate. The sequence is that of Probable adenylyl-sulfate kinase (yisZ) from Bacillus subtilis (strain 168).